The following is a 650-amino-acid chain: Sterol O-acyltransferase 2 (650 aa).

The interval 41–79 is disordered; it reads LTSSNNSCASEHEGEGEGEDERPATTSSAPTQNHSAGDV. The segment covering 64 to 75 has biased composition (polar residues); sequence ATTSSAPTQNHS. A run of 5 helical transmembrane segments spans residues 223–243, 300–320, 412–432, 450–470, and 493–513; these read FSGL…KALI, TGWA…MYLT, INVS…QIEY, IFGT…PVAM, and LLVD…YLIW. Positions 531–537 match the FYXDWWN motif motif; sequence FYGDWWN. Transmembrane regions (helical) follow at residues 575 to 595 and 630 to 650; these read ATLM…YVIF and VIFW…YLTF. Histidine 587 is an active-site residue.

Belongs to the membrane-bound acyltransferase family. Sterol o-acyltransferase subfamily.

It localises to the endoplasmic reticulum membrane. Its function is as follows. Sterol O-acyltransferase that catalyzes the formation of stery esters. This chain is Sterol O-acyltransferase 2 (ARE2), found in Saccharomyces uvarum (strain ATCC 76518 / CBS 7001 / CLIB 283 / NBRC 10550 / MCYC 623 / NCYC 2669 / NRRL Y-11845) (Yeast).